The sequence spans 154 residues: Putative antiporter subunit mnhG2 (154 aa).

3 helical membrane passes run 11–31 (IASI…IGIV), 51–71 (VLLT…FFSV), and 72–92 (RLLL…HLIS).

The protein belongs to the CPA3 antiporters (TC 2.A.63) subunit G family. In terms of assembly, may form a heterooligomeric complex that consists of seven subunits: mnhA2, mnhB2, mnhC2, mnhD2, mnhE2, mnhF2 and mnhG2.

It is found in the cell membrane. In Staphylococcus epidermidis (strain ATCC 35984 / DSM 28319 / BCRC 17069 / CCUG 31568 / BM 3577 / RP62A), this protein is Putative antiporter subunit mnhG2 (mnhG2).